The sequence spans 392 residues: Probable tRNA sulfurtransferase (392 aa).

Positions 59-167 constitute a THUMP domain; sequence ADITDRVKKV…DQAFVFSNKI (109 aa). ATP-binding positions include 184-185, 209-210, Arg266, Gly288, and Gln297; these read LL and HF.

The protein belongs to the ThiI family.

Its subcellular location is the cytoplasm. The enzyme catalyses [ThiI sulfur-carrier protein]-S-sulfanyl-L-cysteine + a uridine in tRNA + 2 reduced [2Fe-2S]-[ferredoxin] + ATP + H(+) = [ThiI sulfur-carrier protein]-L-cysteine + a 4-thiouridine in tRNA + 2 oxidized [2Fe-2S]-[ferredoxin] + AMP + diphosphate. It catalyses the reaction [ThiS sulfur-carrier protein]-C-terminal Gly-Gly-AMP + S-sulfanyl-L-cysteinyl-[cysteine desulfurase] + AH2 = [ThiS sulfur-carrier protein]-C-terminal-Gly-aminoethanethioate + L-cysteinyl-[cysteine desulfurase] + A + AMP + 2 H(+). It functions in the pathway cofactor biosynthesis; thiamine diphosphate biosynthesis. Functionally, catalyzes the ATP-dependent transfer of a sulfur to tRNA to produce 4-thiouridine in position 8 of tRNAs, which functions as a near-UV photosensor. Also catalyzes the transfer of sulfur to the sulfur carrier protein ThiS, forming ThiS-thiocarboxylate. This is a step in the synthesis of thiazole, in the thiamine biosynthesis pathway. The sulfur is donated as persulfide by IscS. This Alkaliphilus oremlandii (strain OhILAs) (Clostridium oremlandii (strain OhILAs)) protein is Probable tRNA sulfurtransferase.